The following is a 304-amino-acid chain: Protein phosphatase PTC7 homolog (304 aa).

The transit peptide at 1 to 68 (MFSVLSYGRL…GDDACFVARH (68 aa)) directs the protein to the mitochondrion. The 231-residue stretch at 69–299 (RSADVLGVAD…DDITVLLSIV (231 aa)) folds into the PPM-type phosphatase domain. Mn(2+) is bound by residues Asp-78, Gly-79, and Asp-223.

It belongs to the PP2C family. In terms of assembly, interacts with FBXL4, BNIP3 and NIX; these interactions are important for ubiquitination and degradation of BNIP3 and NIX. Mg(2+) is required as a cofactor. Mn(2+) serves as cofactor. In terms of tissue distribution, expressed in keratinocytes (at protein level).

The protein resides in the mitochondrion matrix. It catalyses the reaction O-phospho-L-seryl-[protein] + H2O = L-seryl-[protein] + phosphate. The catalysed reaction is O-phospho-L-threonyl-[protein] + H2O = L-threonyl-[protein] + phosphate. Its activity is regulated as follows. Inhibited by sodium orthovanadate. Protein phosphatase that plays an essential role in mitochondrial metabolism and biogenesis. Positively regulates biosynthesis of the ubiquinone, coenzyme Q. Dephosphorylates the ubiquinone biosynthesis protein COQ7 which is likely to lead to its activation. Serves as a crucial sensor for mitophagy, though the underlying mechanism remains ambiguous. May dephosphorylate BNIP3 and NIX and thereby directly regulates mitophagy receptor function and stability. Alternatively, promotes SCF-FBXL4-dependent ubiquitination and degradation of BNIP3 and NIX independently of its catalytic activity to restrain mitophagy. This Homo sapiens (Human) protein is Protein phosphatase PTC7 homolog (PPTC7).